An 86-amino-acid chain; its full sequence is MEESHAVREMIKIIAKWDPFKYGEEFYETEAVDVVQAVYDENDPDLLAKSIQQIFETSFEQTLPIASCREVAGQLLFIKNSSSCTP.

This is an uncharacterized protein from Bacillus subtilis (strain 168).